A 206-amino-acid chain; its full sequence is Cytochrome c biogenesis ATP-binding export protein CcmA (206 aa).

The ABC transporter domain maps to 2–206; that stretch reads LEARDVVCIR…IQLTPSEGTP (205 aa). 34 to 41 serves as a coordination point for ATP; sequence GANGVGKT.

Belongs to the ABC transporter superfamily. CcmA exporter (TC 3.A.1.107) family. In terms of assembly, the complex is composed of two ATP-binding proteins (CcmA) and two transmembrane proteins (CcmB).

The protein resides in the cell inner membrane. The catalysed reaction is heme b(in) + ATP + H2O = heme b(out) + ADP + phosphate + H(+). Functionally, part of the ABC transporter complex CcmAB involved in the biogenesis of c-type cytochromes; once thought to export heme, this seems not to be the case, but its exact role is uncertain. Responsible for energy coupling to the transport system. The sequence is that of Cytochrome c biogenesis ATP-binding export protein CcmA from Pectobacterium atrosepticum (strain SCRI 1043 / ATCC BAA-672) (Erwinia carotovora subsp. atroseptica).